A 426-amino-acid polypeptide reads, in one-letter code: AP-1 complex subunit mu-1 (426 aa).

An MHD domain is found at 167-425 (KNEVFLDVIE…TQNGTEYSIR (259 aa)).

This sequence belongs to the adaptor complexes medium subunit family. As to quaternary structure, adaptor protein complex 1 (AP-1) is a heterotetramer composed of two large adaptins (gamma-type subunit apl4 and beta-type subunit apl2), a medium adaptin (mu-type subunit apm1) and a small adaptin (sigma-type subunit aps1). AP-1 interacts with clathrin. Interacts with sad1.

It localises to the cytoplasmic vesicle. It is found in the clathrin-coated vesicle membrane. The protein localises to the membrane. Its subcellular location is the clathrin-coated pit. In terms of biological role, component of the adaptor complexes which link clathrin to receptors in coated vesicles. Clathrin-associated protein complexes are believed to interact with the cytoplasmic tails of membrane proteins, leading to their selection and concentration. The chain is AP-1 complex subunit mu-1 (apm1) from Schizosaccharomyces pombe (strain 972 / ATCC 24843) (Fission yeast).